A 208-amino-acid chain; its full sequence is High frequency lysogenization protein HflD homolog (208 aa).

Belongs to the HflD family.

It localises to the cytoplasm. Its subcellular location is the cell inner membrane. The sequence is that of High frequency lysogenization protein HflD homolog from Edwardsiella ictaluri (strain 93-146).